Here is a 1742-residue protein sequence, read N- to C-terminus: Complement C4 (1742 aa).

A signal peptide spans 1–19 (MRLLWGLLWAFGLFASSLQ). N-linked (GlcNAc...) asparagine glycosylation is present at Asn60. Cysteines 68 and 97 form a disulfide. Asn226 is a glycosylation site (N-linked (GlcNAc...) asparagine). The cysteines at positions 634 and 668 are disulfide-linked. Residues 675–678 (RKKR) constitute a propeptide that is removed on maturation. 3 disulfide bridges follow: Cys701–Cys727, Cys702–Cys734, and Cys715–Cys735. An Anaphylatoxin-like domain is found at 701–735 (CCQDGLTRLPMVRSCEQRAARVLQPACREPFLSCC). An N-linked (GlcNAc...) asparagine glycan is attached at Asn861. Positions 1007–1010 (CGEQ) form a cross-link, isoglutamyl cysteine thioester (Cys-Gln). Residues Asn1325 and Asn1388 are each glycosylated (N-linked (GlcNAc...) asparagine). Sulfotyrosine is present on residues Tyr1414, Tyr1418, and Tyr1420. The propeptide occupies 1445 to 1451 (RRNRRRR). 5 disulfides stabilise this stretch: Cys1469-Cys1533, Cys1581-Cys1586, Cys1593-Cys1671, Cys1616-Cys1740, and Cys1716-Cys1725. Residues 1593–1740 (CPRQRRALER…FIQEYSTLGC (148 aa)) form the NTR domain.

In terms of assembly, in absence of complement activation, circulates in blood as a disulfide-linked trimer of an alpha, beta and gamma chain. Complement C4b is composed of complement C4b-A, complement C4 beta and complement C4 gamma chains that are associated via disulfide bonds. Non-enzymatic component of the C3 convertase, also named C4bC2b, composed of the serine protease complement C2b (C2), as well as complement C4b. Non-enzymatic component of the C5 convertase, also named C4bC2bC3b, composed of the serine protease complement C2b (C2), complement C3b, as well as complement C4b. Prior to secretion, the single-chain precursor is enzymatically cleaved by plasminogen (PLG) to yield non-identical chains alpha, beta and gamma. During activation of the complement systems, the alpha chain is cleaved into C4a and C4b by different proteases depending on the complement pathway: C4b stays linked to the beta and gamma chains, while C4a is released in the plasma. The alpha chain is cleaved by C1S to generate C4a and C4b following activation by the classical complement system. The alpha chain is cleaved to generate C4a and C4b by MASP2 following activation by the lectin complement system. The alpha chain is cleaved by GZMK to generate C4a and C4b following activation by the GZMK complement system. Further degradation of C4b by C1 into the inactive fragments C4c and C4d blocks the generation of C3 convertase. The proteolytic cleavages often are incomplete so that many structural forms can be found in plasma. In terms of processing, upon activation, the internal thioester bond reacts with carbohydrate antigens on the target surface to form amide or ester bonds, leading to covalent association with the surface of pathogens. Post-translationally, complement C4b interacts with complement C3b via a thioester linkage. N- and O-glycosylated. O-glycosylated with a core 1 or possibly core 8 glycan.

It is found in the secreted. The protein resides in the cell surface. In terms of biological role, precursor of non-enzymatic components of the classical, lectin and GZMK complement pathways, which consist in a cascade of proteins that leads to phagocytosis and breakdown of pathogens and signaling that strengthens the adaptive immune system. Functionally, non-enzymatic component of C3 and C5 convertases. Generated following cleavage by complement proteases (C1S, MASP2 or GZMK, depending on the complement pathway), it covalently attaches to the surface of pathogens, where it acts as an opsonin that marks the surface of antigens for removal. It then recruits the serine protease complement C2b to form the C3 and C5 convertases, which cleave and activate C3 and C5, respectively, the next components of the complement pathways. Complement C4b-A isotype is responsible for effective binding to form amide bonds with immune aggregates or protein antigens, while complement C4b-B isotype catalyzes the transacylation of the thioester carbonyl group to form ester bonds with carbohydrate antigens. Its function is as follows. Putative humoral mediator released following cleavage by complement proteases (C1S, MASP2 or GZMK, depending on the complement pathway). While it is strongly similar to anaphylatoxins, its role is unclear. Was reported to act as a mediator of local inflammatory process; however these effects were probably due to contamination with C3a and/C5a anaphylatoxins in biological assays. The sequence is that of Complement C4 from Cavia porcellus (Guinea pig).